The following is a 796-amino-acid chain: MNQTASVSHHIKCQPSKTIKELGSNSPPQRNWKGIAIALLVILVVCSLITMSVILLTPDELTNSSETRLSLEDLFRKDFVLHDPEARWINDTDVVYKSENGHVIKLNIETNATTLLLENTTFVTFKASRHSVSPDLKYVLLAYDVKQIFHYSYTASYVIYNIHTREVWELNPPEVEDSVLQYAAWGVQGQQLIYIFENNIYYQPDIKSSSLRLTSSGKEEIIFNGIADWLYEEELLHSHIAHWWSPDGERLAFLMINDSLVPTMVIPRFTGALYPKGKQYPYPKAGQVNPTIKLYVVNLYGPTHTLELMPPDSFKSREYYITMVKWVSNTKTVVRWLNRAQNISILTVCETTTGACSKKYEMTSDTWLSQQNEEPVFSRDGSKFFMTVPVKQGGRGEFHHVAMFLIQSKSEQITVRHLTSGNWEVIKILAYDETTQKIYFLSTESSPRGRQLYSASTEGLLNRQCISCNFMKEQCTYFDASFSPMNQHFLLFCEGPRVPVVSLHSTDNPAKYFILESNSMLKEAILKKKIGKPEIKILHIDDYELPLQLSLPKDFMDRNQYALLLIMDEEPGGQLVTDKFHIDWDSVLIDMDNVIVARFDGRGSGFQGLKILQEIHRRLGSVEVKDQITAVKFLLKLPYIDSKRLSIFGKGYGGYIASMILKSDEKLFKCGSVVAPITDLKLYASAFSERYLGMPSKEESTYQAASVLHNVHGLKEENILIIHGTADTKVHFQHSAELIKHLIKAGVNYTMQVYPDEGHNVSEKSKYHLYSTILKFFSDCLKEEISVLPQEPEEDE.

The Cytoplasmic segment spans residues 1-34 (MNQTASVSHHIKCQPSKTIKELGSNSPPQRNWKG). A mediates effects on KCND2 region spans residues 1-56 (MNQTASVSHHIKCQPSKTIKELGSNSPPQRNWKGIAIALLVILVVCSLITMSVILL). A helical; Signal-anchor for type II membrane protein membrane pass occupies residues 35 to 55 (IAIALLVILVVCSLITMSVIL). The Extracellular portion of the chain corresponds to 56 to 796 (LTPDELTNSS…VLPQEPEEDE (741 aa)). N-linked (GlcNAc...) asparagine glycosylation is found at Asn90, Asn111, and Asn119. Tyr138 and Tyr143 each carry phosphotyrosine. 3 N-linked (GlcNAc...) asparagine glycosylation sites follow: Asn257, Asn342, and Asn748.

It belongs to the peptidase S9B family. DPPIV subfamily. As to quaternary structure, may form oligomers. Interacts with KCND1. Interacts with KCND2. Post-translationally, N-glycosylation is important for cell surface expression, specially at Asn-257, which is crucial. As to expression, found in serum, T-cells and brain (at protein level). Expressed in brain, pancreas, spinal cord and adrenal glands.

The protein localises to the cell membrane. Its function is as follows. Promotes cell surface expression of the potassium channel KCND2. Modulates the activity and gating characteristics of the potassium channel KCND2. Has no dipeptidyl aminopeptidase activity. This Homo sapiens (Human) protein is Inactive dipeptidyl peptidase 10 (DPP10).